The primary structure comprises 199 residues: MAATAFLVLTYLLGAFPFGLVVALVGRGIDPRLAGSRNTGATNVSRLCGTKLGVLTLVLDLAKGLVPVLCARAMTDSPVFLSMVAVAAVVGHMYSVFLYGKGGKGVATTIGVFLGGAPIPALLSVAVCVAVIRVSGYVSAGSLTLAVALPILCAWLGPVFLVPAAAIIGGLVIHKHRDNIARLRSGQEKSWRKDRAKAA.

5 consecutive transmembrane segments (helical) span residues 5–25 (AFLV…VALV), 51–71 (KLGV…VLCA), 79–99 (VFLS…VFLY), 112–132 (VFLG…VAVI), and 153–173 (CAWL…GLVI).

This sequence belongs to the PlsY family. As to quaternary structure, probably interacts with PlsX.

It localises to the cell inner membrane. It carries out the reaction an acyl phosphate + sn-glycerol 3-phosphate = a 1-acyl-sn-glycero-3-phosphate + phosphate. Its pathway is lipid metabolism; phospholipid metabolism. In terms of biological role, catalyzes the transfer of an acyl group from acyl-phosphate (acyl-PO(4)) to glycerol-3-phosphate (G3P) to form lysophosphatidic acid (LPA). This enzyme utilizes acyl-phosphate as fatty acyl donor, but not acyl-CoA or acyl-ACP. The protein is Glycerol-3-phosphate acyltransferase of Solidesulfovibrio magneticus (strain ATCC 700980 / DSM 13731 / RS-1) (Desulfovibrio magneticus).